The chain runs to 511 residues: 2,3-bisphosphoglycerate-independent phosphoglycerate mutase (511 aa).

Mn(2+) contacts are provided by aspartate 14 and serine 64. The Phosphoserine intermediate role is filled by serine 64. Substrate is bound by residues histidine 125, 155-156 (RD), arginine 187, arginine 193, 259-262 (RADR), and lysine 333. The Mn(2+) site is built by aspartate 400, histidine 404, aspartate 441, histidine 442, and histidine 460.

The protein belongs to the BPG-independent phosphoglycerate mutase family. In terms of assembly, monomer. Mn(2+) serves as cofactor.

It catalyses the reaction (2R)-2-phosphoglycerate = (2R)-3-phosphoglycerate. Its pathway is carbohydrate degradation; glycolysis; pyruvate from D-glyceraldehyde 3-phosphate: step 3/5. Its function is as follows. Catalyzes the interconversion of 2-phosphoglycerate and 3-phosphoglycerate. This Pseudomonas entomophila (strain L48) protein is 2,3-bisphosphoglycerate-independent phosphoglycerate mutase.